Here is a 292-residue protein sequence, read N- to C-terminus: UTP--glucose-1-phosphate uridylyltransferase (292 aa).

This sequence belongs to the UDPGP type 2 family. As to quaternary structure, interacts with FloT.

The protein localises to the cell membrane. It localises to the membrane raft. It catalyses the reaction alpha-D-glucose 1-phosphate + UTP + H(+) = UDP-alpha-D-glucose + diphosphate. Its pathway is glycolipid metabolism; diglucosyl-diacylglycerol biosynthesis. Its function is as follows. Catalyzes the formation of UDP-glucose from glucose-1-phosphate and UTP. This is an intermediate step in the biosynthesis of diglucosyl-diacylglycerol (Glc2-DAG), i.e. the predominant glycolipid found in B.subtilis membrane, which is also used as a membrane anchor for lipoteichoic acid (LTA). Has a role in the biosynthesis of all phosphate-containing envelope polymers, since UDP-glucose serves as a glucosyl donor not only for the biosynthesis of LTA but also for wall teichoic acids (WTAs). Is required for biofilm formation. This is likely due to another role of UDP-glucose, which might also act as a metabolic signal regulating biofilm formation or may be involved in some unknown biosynthetic pathway essential for biofilm formation, e.g. the synthesis of an exopolysaccharide. In Bacillus subtilis (strain 168), this protein is UTP--glucose-1-phosphate uridylyltransferase (gtaB).